Reading from the N-terminus, the 394-residue chain is RNA-binding motif protein, X-linked-like-2 (394 aa).

The region spanning Gly-8–Lys-86 is the RRM domain. A compositionally biased stretch (basic and acidic residues) spans Arg-67–Ala-78. The tract at residues Arg-67 to Tyr-394 is disordered. The span at Arg-150–Arg-165 shows a compositional bias: pro residues. 2 stretches are compositionally biased toward basic and acidic residues: residues Pro-196–Arg-231 and Glu-239–Phe-285. Residues Tyr-321–Gly-333 are compositionally biased toward low complexity. 2 stretches are compositionally biased toward basic and acidic residues: residues Arg-334–Arg-350 and Gly-383–Tyr-394.

It localises to the nucleus. This chain is RNA-binding motif protein, X-linked-like-2 (RBMXL2), found in Macaca fascicularis (Crab-eating macaque).